The chain runs to 124 residues: Ribonuclease pancreatic (124 aa).

Over residues 1–13 (SETAAEKFERQHM) the composition is skewed to basic and acidic residues. Positions 1–23 (SETAAEKFERQHMDSYSSSSSNS) are disordered. Residues lysine 7 and arginine 10 each contribute to the substrate site. Histidine 12 acts as the Proton acceptor in catalysis. Disulfide bonds link cysteine 26–cysteine 84, cysteine 40–cysteine 95, cysteine 58–cysteine 110, and cysteine 65–cysteine 72. Substrate-binding positions include 41–45 (KPVNT), lysine 66, and arginine 85. The Proton donor role is filled by histidine 119.

This sequence belongs to the pancreatic ribonuclease family. In terms of assembly, monomer. Interacts with and forms tight 1:1 complexes with RNH1. Dimerization of two such complexes may occur. Interaction with RNH1 inhibits this protein. Pancreas.

The protein resides in the secreted. It carries out the reaction an [RNA] containing cytidine + H2O = an [RNA]-3'-cytidine-3'-phosphate + a 5'-hydroxy-ribonucleotide-3'-[RNA].. It catalyses the reaction an [RNA] containing uridine + H2O = an [RNA]-3'-uridine-3'-phosphate + a 5'-hydroxy-ribonucleotide-3'-[RNA].. Functionally, endonuclease that catalyzes the cleavage of RNA on the 3' side of pyrimidine nucleotides. Acts on single-stranded and double-stranded RNA. This chain is Ribonuclease pancreatic (RNASE1), found in Camelus dromedarius (Dromedary).